The sequence spans 196 residues: ATP-dependent Clp protease proteolytic subunit (196 aa).

Catalysis depends on S101, which acts as the Nucleophile. H126 is an active-site residue.

The protein belongs to the peptidase S14 family. In terms of assembly, component of the chloroplastic Clp protease core complex.

The protein resides in the plastid. It is found in the chloroplast stroma. It catalyses the reaction Hydrolysis of proteins to small peptides in the presence of ATP and magnesium. alpha-casein is the usual test substrate. In the absence of ATP, only oligopeptides shorter than five residues are hydrolyzed (such as succinyl-Leu-Tyr-|-NHMec, and Leu-Tyr-Leu-|-Tyr-Trp, in which cleavage of the -Tyr-|-Leu- and -Tyr-|-Trp bonds also occurs).. Functionally, cleaves peptides in various proteins in a process that requires ATP hydrolysis. Has a chymotrypsin-like activity. Plays a major role in the degradation of misfolded proteins. The chain is ATP-dependent Clp protease proteolytic subunit from Barbarea verna (Land cress).